A 122-amino-acid polypeptide reads, in one-letter code: Large ribosomal subunit protein bL20 (122 aa).

This sequence belongs to the bacterial ribosomal protein bL20 family.

Its function is as follows. Binds directly to 23S ribosomal RNA and is necessary for the in vitro assembly process of the 50S ribosomal subunit. It is not involved in the protein synthesizing functions of that subunit. The protein is Large ribosomal subunit protein bL20 of Saccharopolyspora erythraea (strain ATCC 11635 / DSM 40517 / JCM 4748 / NBRC 13426 / NCIMB 8594 / NRRL 2338).